Here is a 467-residue protein sequence, read N- to C-terminus: E3 ubiquitin-protein ligase IE61 (467 aa).

The RING-type zinc-finger motif lies at 19 to 58 (CTICMSTVSDLGKTMPCLHDFCFVCIRAWTSTSVQCPLCR). Disordered regions lie at residues 101–171 (GDVI…GVTK), 205–238 (QQPR…FRAT), 344–364 (IVRP…RDTR), and 413–467 (DSAC…MKKS). Polar residues predominate over residues 116–143 (ESIQQPTSRSSREPIQSPNPGPLQSSAR). The span at 149–161 (SPSDSQQDSIQPP) shows a compositional bias: low complexity. Residues 162–171 (TRDSSPGVTK) show a composition bias toward polar residues. The segment covering 228 to 238 (RTMDRLPFRAT) has biased composition (basic and acidic residues). Low complexity-rich tracts occupy residues 429–443 (GESN…TSGS) and 450–459 (KSSAGKAGKG).

As to quaternary structure, interacts with host BTRC; this interaction seems to inactivate SCF-mediated protein degradation in general. In terms of processing, auto-ubiquitinated.

It carries out the reaction S-ubiquitinyl-[E2 ubiquitin-conjugating enzyme]-L-cysteine + [acceptor protein]-L-lysine = [E2 ubiquitin-conjugating enzyme]-L-cysteine + N(6)-ubiquitinyl-[acceptor protein]-L-lysine.. In terms of biological role, RING-finger E3 ubiquitin ligase that degrades host SP100, one of the major components of ND10 nuclear bodies, thereby disrupting the organization of these bodies. Also plays a role in the inhibition of host NF-kappa-B pathway by blocking the SCF(BTRC)-mediated addition of ubiquitin chains to host I-kappa-B-alpha/NFKBIA, thereby interfering with its degradation. This chain is E3 ubiquitin-protein ligase IE61 (61), found in Varicella-zoster virus (strain Dumas) (HHV-3).